The primary structure comprises 152 residues: Transcriptional repressor NrdR (152 aa).

Residues 3-34 (CPYCSYNESKVVDSRSTEDSISIRRRRECLEC) fold into a zinc finger. The ATP-cone domain maps to 49–139 (ILVIKKNLNR…VYRQFKDINT (91 aa)).

The protein belongs to the NrdR family. Requires Zn(2+) as cofactor.

Negatively regulates transcription of bacterial ribonucleotide reductase nrd genes and operons by binding to NrdR-boxes. This Clostridium tetani (strain Massachusetts / E88) protein is Transcriptional repressor NrdR.